The sequence spans 69 residues: Beta-defensin 1 (69 aa).

The signal sequence occupies residues 1-21; the sequence is MKTHYFLLVMICFLFSQMEPG. Positions 22 to 32 are excised as a propeptide; it reads VGILTSLGRRT. Intrachain disulfides connect cysteine 37–cysteine 66, cysteine 44–cysteine 59, and cysteine 49–cysteine 67.

This sequence belongs to the beta-defensin family. In terms of assembly, monomer. Homodimer. In terms of tissue distribution, detected in kidney.

Its subcellular location is the secreted. The protein localises to the membrane. In terms of biological role, has bactericidal activity. May act as a ligand for C-C chemokine receptor CCR6. Positively regulates the sperm motility and bactericidal activity in a CCR6-dependent manner. Binds to CCR6 and triggers Ca2+ mobilization in the sperm which is important for its motility. The protein is Beta-defensin 1 (Defb1) of Mus musculus (Mouse).